A 120-amino-acid polypeptide reads, in one-letter code: Ribonuclease P protein component (120 aa).

It belongs to the RnpA family. As to quaternary structure, consists of a catalytic RNA component (M1 or rnpB) and a protein subunit.

It carries out the reaction Endonucleolytic cleavage of RNA, removing 5'-extranucleotides from tRNA precursor.. Functionally, RNaseP catalyzes the removal of the 5'-leader sequence from pre-tRNA to produce the mature 5'-terminus. It can also cleave other RNA substrates such as 4.5S RNA. The protein component plays an auxiliary but essential role in vivo by binding to the 5'-leader sequence and broadening the substrate specificity of the ribozyme. The protein is Ribonuclease P protein component of Chlamydia trachomatis serovar L2 (strain ATCC VR-902B / DSM 19102 / 434/Bu).